The primary structure comprises 356 residues: Phosphate acyltransferase (356 aa).

The protein belongs to the PlsX family. Homodimer. Probably interacts with PlsY.

It is found in the cytoplasm. It carries out the reaction a fatty acyl-[ACP] + phosphate = an acyl phosphate + holo-[ACP]. The protein operates within lipid metabolism; phospholipid metabolism. Functionally, catalyzes the reversible formation of acyl-phosphate (acyl-PO(4)) from acyl-[acyl-carrier-protein] (acyl-ACP). This enzyme utilizes acyl-ACP as fatty acyl donor, but not acyl-CoA. This Bartonella bacilliformis (strain ATCC 35685 / KC583 / Herrer 020/F12,63) protein is Phosphate acyltransferase.